Here is a 93-residue protein sequence, read N- to C-terminus: Guanine nucleotide-binding protein subunit gamma 1 (93 aa).

A coiled-coil region spans residues 12–52 (TRGRHRIQAELKKLEQEARFLEEELEELDKTDKVSAALQEL). A G protein gamma domain is found at 20–93 (AELKKLEQEA…DLRRCKCWFL (74 aa)). Cys-88 carries the S-palmitoyl cysteine lipid modification. A Cysteine methyl ester modification is found at Cys-90. The S-farnesyl cysteine moiety is linked to residue Cys-90. Residues 91–93 (WFL) constitute a propeptide, removed in mature form.

In terms of assembly, g proteins are composed of 3 units, alpha, beta and gamma. Interacts with the beta subunit RGB1.

It is found in the cell membrane. In terms of biological role, guanine nucleotide-binding proteins (G proteins) are involved as modulators or transducers in various transmembrane signaling systems. The polypeptide is Guanine nucleotide-binding protein subunit gamma 1 (Oryza sativa subsp. indica (Rice)).